Reading from the N-terminus, the 342-residue chain is S-adenosylmethionine:tRNA ribosyltransferase-isomerase (342 aa).

It belongs to the QueA family. As to quaternary structure, monomer.

The protein localises to the cytoplasm. It carries out the reaction 7-aminomethyl-7-carbaguanosine(34) in tRNA + S-adenosyl-L-methionine = epoxyqueuosine(34) in tRNA + adenine + L-methionine + 2 H(+). It participates in tRNA modification; tRNA-queuosine biosynthesis. Its function is as follows. Transfers and isomerizes the ribose moiety from AdoMet to the 7-aminomethyl group of 7-deazaguanine (preQ1-tRNA) to give epoxyqueuosine (oQ-tRNA). This chain is S-adenosylmethionine:tRNA ribosyltransferase-isomerase, found in Geobacillus sp. (strain WCH70).